The sequence spans 382 residues: Transforming growth factor beta-1 proprotein (382 aa).

The N-terminal stretch at 1–21 is a signal peptide; it reads MEVLWMLLVLLVLHLSSLAMS. The straightjacket domain stretch occupies residues 22-65; it reads LSTCKAVDMEEVRKRRIEAIRGQILSKLKLDKTPDVDSEKMTVP. The interval 66-263 is arm domain; the sequence is SEAIFLYNST…SMPAERIDTV (198 aa). 3 N-linked (GlcNAc...) asparagine glycosylation sites follow: Asn-73, Asn-123, and Asn-166. Residues 218–242 are bowtie tail; that stretch reads PTPQAKDIDIEGFPALRGDLASLSS. The Cell attachment site signature appears at 234–236; it reads RGD. Disulfide bonds link Cys-277–Cys-286, Cys-285–Cys-348, Cys-314–Cys-379, and Cys-318–Cys-381.

It belongs to the TGF-beta family. Latency-associated peptide: Homodimer; disulfide-linked. Latency-associated peptide: Interacts with Transforming growth factor beta-1 (TGF-beta-1) chain; interaction is non-covalent and maintains (TGF-beta-1) in a latent state; each Latency-associated peptide (LAP) monomer interacts with TGF-beta-1 in the other monomer. Transforming growth factor beta-1: Homodimer; disulfide-linked. Transforming growth factor beta-1: Interacts with TGF-beta receptors (tgfbr1 and tgfbr2), leading to signal transduction. Transforming growth factor beta-1 proprotein: The precursor proprotein is cleaved in the Golgi apparatus to form Transforming growth factor beta-1 (TGF-beta-1) and Latency-associated peptide (LAP) chains, which remain non-covalently linked, rendering TGF-beta-1 inactive.

The protein localises to the secreted. It localises to the extracellular space. The protein resides in the extracellular matrix. In terms of biological role, transforming growth factor beta-1 proprotein: Precursor of the Latency-associated peptide (LAP) and Transforming growth factor beta-1 (TGF-beta-1) chains, which constitute the regulatory and active subunit of TGF-beta-1, respectively. Functionally, required to maintain the Transforming growth factor beta-1 (TGF-beta-1) chain in a latent state during storage in extracellular matrix. Associates non-covalently with TGF-beta-1 and regulates its activation via interaction with 'milieu molecules', such as LTBP1, LRRC32/GARP and LRRC33/NRROS, that control activation of TGF-beta-1. Interaction with integrins (ITGAV:ITGB6 or ITGAV:ITGB8) results in distortion of the Latency-associated peptide chain and subsequent release of the active TGF-beta-1. Its function is as follows. Transforming growth factor beta-1: Multifunctional protein that regulates the growth and differentiation of various cell types and is involved in various processes, such as normal development, immune function, microglia function and responses to neurodegeneration. Activation into mature form follows different steps: following cleavage of the proprotein in the Golgi apparatus, Latency-associated peptide (LAP) and Transforming growth factor beta-1 (TGF-beta-1) chains remain non-covalently linked rendering TGF-beta-1 inactive during storage in extracellular matrix. At the same time, LAP chain interacts with 'milieu molecules', such as ltbp1, lrrc32/garp and lrrc33/nrros that control activation of TGF-beta-1 and maintain it in a latent state during storage in extracellular milieus. TGF-beta-1 is released from LAP by integrins (ITGAV:ITGB6 or ITGAV:ITGB8): integrin-binding to LAP stabilizes an alternative conformation of the LAP bowtie tail and results in distortion of the LAP chain and subsequent release of the active TGF-beta-1. Once activated following release of LAP, TGF-beta-1 acts by binding to TGF-beta receptors (tgfbr1 and tgfbr2), which transduce signal. While expressed by many cells types, TGF-beta-1 only has a very localized range of action within cell environment thanks to fine regulation of its activation by Latency-associated peptide chain (LAP) and 'milieu molecules'. Plays an important role in bone remodeling: acts as a potent stimulator of osteoblastic bone formation. Can promote either T-helper 17 cells (Th17) or regulatory T-cells (Treg) lineage differentiation in a concentration-dependent manner. Can induce epithelial-to-mesenchymal transition (EMT) and cell migration in various cell types. The sequence is that of Transforming growth factor beta-1 proprotein (tgfb1) from Xenopus laevis (African clawed frog).